A 221-amino-acid polypeptide reads, in one-letter code: Deoxyribose-phosphate aldolase (221 aa).

The Proton donor/acceptor role is filled by Asp90. The active-site Schiff-base intermediate with acetaldehyde is Lys152. Lys181 functions as the Proton donor/acceptor in the catalytic mechanism.

This sequence belongs to the DeoC/FbaB aldolase family. DeoC type 1 subfamily.

Its subcellular location is the cytoplasm. The enzyme catalyses 2-deoxy-D-ribose 5-phosphate = D-glyceraldehyde 3-phosphate + acetaldehyde. It functions in the pathway carbohydrate degradation; 2-deoxy-D-ribose 1-phosphate degradation; D-glyceraldehyde 3-phosphate and acetaldehyde from 2-deoxy-alpha-D-ribose 1-phosphate: step 2/2. Its function is as follows. Catalyzes a reversible aldol reaction between acetaldehyde and D-glyceraldehyde 3-phosphate to generate 2-deoxy-D-ribose 5-phosphate. The chain is Deoxyribose-phosphate aldolase from Exiguobacterium sibiricum (strain DSM 17290 / CCUG 55495 / CIP 109462 / JCM 13490 / 255-15).